We begin with the raw amino-acid sequence, 266 residues long: Signal peptidase I (266 aa).

Residues 1–20 are Cytoplasmic-facing; sequence MQTDNTKSNTNKTAKQEWGS. The chain crosses the membrane as a helical span at residues 21 to 41; the sequence is FAFVICIALLIRILIMEPFTV. The Periplasmic segment spans residues 42 to 266; the sequence is PTGSMKATIL…IFRNLYSTDE (225 aa). Active-site residues include Ser45 and Lys108.

It belongs to the peptidase S26 family.

It localises to the cell inner membrane. It catalyses the reaction Cleavage of hydrophobic, N-terminal signal or leader sequences from secreted and periplasmic proteins.. In Rickettsia felis (strain ATCC VR-1525 / URRWXCal2) (Rickettsia azadi), this protein is Signal peptidase I (lepB).